Reading from the N-terminus, the 344-residue chain is L-rhamnose-proton symporter (344 aa).

Helical transmembrane passes span 4 to 24 (AITM…CFYA), 38 to 58 (WSVG…ATLL), 68 to 88 (FSAS…IGNI), 101 to 121 (MGIG…TPII), 131 to 151 (TQGG…VGIV), 175 to 195 (LLLA…MNAA), 214 to 234 (LPSY…FCFI), 259 to 279 (LLLS…YAWG), 290 to 310 (MSWM…GLVL), and 323 to 343 (VLSL…LGMA).

Belongs to the L-rhamnose transporter (TC 2.A.7.6) family.

It is found in the cell inner membrane. The catalysed reaction is L-rhamnopyranose(in) + H(+)(in) = L-rhamnopyranose(out) + H(+)(out). Functionally, uptake of L-rhamnose across the cytoplasmic membrane with the concomitant transport of protons into the cell (symport system). In Klebsiella pneumoniae subsp. pneumoniae (strain ATCC 700721 / MGH 78578), this protein is L-rhamnose-proton symporter.